The chain runs to 110 residues: Large ribosomal subunit protein uL22 (110 aa).

The protein belongs to the universal ribosomal protein uL22 family. Part of the 50S ribosomal subunit.

Functionally, this protein binds specifically to 23S rRNA; its binding is stimulated by other ribosomal proteins, e.g. L4, L17, and L20. It is important during the early stages of 50S assembly. It makes multiple contacts with different domains of the 23S rRNA in the assembled 50S subunit and ribosome. The globular domain of the protein is located near the polypeptide exit tunnel on the outside of the subunit, while an extended beta-hairpin is found that lines the wall of the exit tunnel in the center of the 70S ribosome. This chain is Large ribosomal subunit protein uL22, found in Glaesserella parasuis serovar 5 (strain SH0165) (Haemophilus parasuis).